The primary structure comprises 824 residues: Fibroblast growth factor receptor 2 (824 aa).

Residues 1–21 form the signal peptide; that stretch reads MFSWSYLMGLVMVATATLSLA. The Extracellular segment spans residues 22–374; it reads RPSYNIAEDT…LDSSSSEYTE (353 aa). Residues 25–125 enclose the Ig-like C2-type 1 domain; that stretch reads YNIAEDTTLE…ETRYFIVNIT (101 aa). Cys-62 and Cys-107 are joined by a disulfide. N-linked (GlcNAc...) asparagine glycans are attached at residues Asn-83, Asn-123, and Asn-128. Residues 125–152 form a disordered region; that stretch reads TDGNSSGDDEDDNDGSEDFTNDNNHKRA. The span at 131-144 shows a compositional bias: acidic residues; the sequence is GDDEDDNDGSEDFT. Ig-like C2-type domains are found at residues 153–246 and 254–356; these read PYWT…YHLD and PPIL…AWLT. Residues 160-177 are heparin-binding; that stretch reads KLEKKLHAVPAANTVKFR. Cysteines 178 and 230 form a disulfide. 6 N-linked (GlcNAc...) asparagine glycosylation sites follow: Asn-227, Asn-240, Asn-264, Asn-295, Asn-316, and Asn-329. Cysteines 277 and 340 form a disulfide. The helical transmembrane segment at 375 to 395 threads the bilayer; that stretch reads IAIYCVGGFLIACMIGTIMMC. At 396–824 the chain is on the cytoplasmic side; the sequence is HMKGRGKKSD…PLKHEATQPA (429 aa). Tyr-463 carries the phosphotyrosine; by autocatalysis modification. One can recognise a Protein kinase domain in the interval 478–767; it reads LTLGKPLGEG…LTQTTNEEYL (290 aa). Residues 484 to 492, Lys-514, 562 to 564, and Asn-568 each bind ATP; these read LGEGCFGQV and EYA. Tyr-583 bears the Phosphotyrosine; by autocatalysis mark. Asp-623 functions as the Proton acceptor in the catalytic mechanism. Residues Tyr-653, Tyr-654, and Tyr-766 each carry the phosphotyrosine; by autocatalysis modification. A disordered region spans residues 801-824; sequence SMNLAFPNPNTQMAPLKHEATQPA.

It belongs to the protein kinase superfamily. Tyr protein kinase family. Fibroblast growth factor receptor subfamily. Monomer. Homodimer after ligand binding. Autophosphorylated. Binding of FGF family members together with heparan sulfate proteoglycan or heparin promotes receptor dimerization and autophosphorylation on tyrosine residues. Autophosphorylation occurs in trans between the two FGFR molecules present in the dimer. In terms of processing, N-glycosylated in the endoplasmic reticulum. The N-glycan chains undergo further maturation to an Endo H-resistant form in the Golgi apparatus. Post-translationally, ubiquitinated. FGFR2 is rapidly ubiquitinated after autophosphorylation, leading to internalization and degradation. Subject to degradation both in lysosomes and by the proteasome.

Its subcellular location is the cell membrane. The protein localises to the golgi apparatus. It is found in the cytoplasmic vesicle. The catalysed reaction is L-tyrosyl-[protein] + ATP = O-phospho-L-tyrosyl-[protein] + ADP + H(+). Its activity is regulated as follows. Present in an inactive conformation in the absence of bound ligand. Ligand binding leads to dimerization and activation by autophosphorylation on tyrosine residues. Functionally, tyrosine-protein kinase that acts as a cell-surface receptor for fibroblast growth factors and plays an essential role in the regulation of cell proliferation, differentiation, migration and apoptosis, and in the regulation of embryonic development. Required for normal embryonic patterning, limb bud development, lung morphogenesis, osteogenesis and skin development. Plays an essential role in the regulation of osteoblast differentiation, proliferation and apoptosis, and is required for normal skeleton development. Promotes cell proliferation in keratinocytes and immature osteoblasts, but promotes apoptosis in differentiated osteoblasts. Phosphorylates PLCG1, FRS2 and PAK4. Ligand binding leads to the activation of several signaling cascades. Activation of PLCG1 leads to the production of the cellular signaling molecules diacylglycerol and inositol 1,4,5-trisphosphate. Phosphorylation of FRS2 triggers recruitment of GRB2, GAB1, PIK3R1 and SOS1, and mediates activation of RAS, MAPK1/ERK2, MAPK3/ERK1 and the MAP kinase signaling pathway, as well as of the AKT1 signaling pathway. FGFR2 signaling is down-regulated by ubiquitination, internalization and degradation. Mutations that lead to constitutive kinase activation or impair normal FGFR2 maturation, internalization and degradation lead to aberrant signaling. Over-expressed FGFR2 promotes activation of STAT1. This Pleurodeles waltl (Iberian ribbed newt) protein is Fibroblast growth factor receptor 2 (FGFR2).